Here is a 136-residue protein sequence, read N- to C-terminus: Protein PsiE homolog (136 aa).

4 helical membrane-spanning segments follow: residues 15–35 (AMQT…IVFL), 58–78 (VEGL…VKYF), 83–103 (HFPL…LIII), and 108–128 (PMAV…LWLC).

It belongs to the PsiE family.

It localises to the cell inner membrane. The polypeptide is Protein PsiE homolog (Klebsiella pneumoniae (strain 342)).